A 246-amino-acid chain; its full sequence is TATA-box-binding protein (246 aa).

The disordered stretch occupies residues 1–27 (MSSDKTSQQTFKLAPNNSVAQSNSIDQ). 2 repeat units span residues 53-129 (LQNI…AKII) and 143-220 (IQNI…YWVL).

Belongs to the TBP family. Belongs to the TFIID complex together with the TBP-associated factors (TAFs). Binds DNA as monomer.

It localises to the nucleus. In terms of biological role, general transcription factor that functions at the core of the DNA-binding multiprotein factor TFIID. Binding of TFIID to the TATA box is the initial transcriptional step of the pre-initiation complex (PIC), playing a role in the activation of eukaryotic genes transcribed by RNA polymerase II. This is TATA-box-binding protein from Tetrahymena thermophila.